Consider the following 123-residue polypeptide: uncharacterized protein (123 aa).

This is an uncharacterized protein from Aquifex aeolicus (strain VF5).